The chain runs to 387 residues: 17-beta-hydroxysteroid dehydrogenase type 2 (387 aa).

A helical; Signal-anchor for type II membrane protein transmembrane segment spans residues 4-24 (FFSDTAWICLAVPTVLCGTVF). 82-111 (QKAVLVTGGDCGLGHALCKYLDELGFTVFA) contributes to the NAD(+) binding site. S219 contacts substrate. The active site involves Y232.

This sequence belongs to the short-chain dehydrogenases/reductases (SDR) family. Homodimer. In terms of tissue distribution, expressed in placenta.

It is found in the endoplasmic reticulum membrane. It carries out the reaction 17beta-estradiol + NAD(+) = estrone + NADH + H(+). The catalysed reaction is testosterone + NAD(+) = androst-4-ene-3,17-dione + NADH + H(+). It catalyses the reaction 17beta-hydroxy-5alpha-androstan-3-one + NAD(+) = 5alpha-androstan-3,17-dione + NADH + H(+). The enzyme catalyses (20S)-hydroxypregn-4-en-3-one + NAD(+) = progesterone + NADH + H(+). Its function is as follows. Catalyzes the NAD-dependent oxidation of the highly active 17beta-hydroxysteroids, such as estradiol (E2), testosterone (T), and dihydrotestosterone (DHT), to their less active forms and thus regulates the biological potency of these steroids. Oxidizes estradiol to estrone, testosterone to androstenedione, and dihydrotestosterone to 5alpha-androstan-3,17-dione. Also has 20-alpha-HSD activity. The polypeptide is 17-beta-hydroxysteroid dehydrogenase type 2 (Homo sapiens (Human)).